We begin with the raw amino-acid sequence, 492 residues long: NADPH:adrenodoxin oxidoreductase, mitochondrial (492 aa).

The N-terminal 32 residues, 1–32, are a transit peptide targeting the mitochondrion; the sequence is MAPRCWRWWPWSSWTRTRLPPSRSIQNFGQHF. 4 residues coordinate FAD: Ala49, Glu70, Leu78, and Val114. NADP(+) contacts are provided by residues 185 to 188, 229 to 230, and Glu241; these read QGNV and RR. Ser311 and Ser318 each carry phosphoserine. FAD is bound by residues Trp399 and 406 to 408; that span reads GVI. Gly406 serves as a coordination point for NADP(+).

The protein belongs to the ferredoxin--NADP reductase type 1 family. Monomer. Interacts directly with FDX1. FAD is required as a cofactor. As to expression, detected in adrenal cortex and corpus luteum (at protein level).

The protein resides in the mitochondrion inner membrane. The enzyme catalyses 2 reduced [adrenodoxin] + NADP(+) + H(+) = 2 oxidized [adrenodoxin] + NADPH. It catalyses the reaction 2 reduced [2Fe-2S]-[ferredoxin] + NADP(+) + H(+) = 2 oxidized [2Fe-2S]-[ferredoxin] + NADPH. Its pathway is steroid metabolism; cholesterol metabolism. Functionally, serves as the first electron transfer protein in all the mitochondrial P450 systems including cholesterol side chain cleavage in all steroidogenic tissues, steroid 11-beta hydroxylation in the adrenal cortex, 25-OH-vitamin D3-24 hydroxylation in the kidney, and sterol C-27 hydroxylation in the liver. Also acts as a ferredoxin--NADP(+) reductase essential for coenzyme Q biosynthesis: together with FDX2, transfers the electrons required for the hydroxylation reaction performed by COQ6. The sequence is that of NADPH:adrenodoxin oxidoreductase, mitochondrial (FDXR) from Bos taurus (Bovine).